We begin with the raw amino-acid sequence, 61 residues long: Large ribosomal subunit protein uL30 (61 aa).

It belongs to the universal ribosomal protein uL30 family. Part of the 50S ribosomal subunit.

This is Large ribosomal subunit protein uL30 from Bifidobacterium adolescentis (strain ATCC 15703 / DSM 20083 / NCTC 11814 / E194a).